Consider the following 163-residue polypeptide: NADH-quinone oxidoreductase subunit I (163 aa).

4Fe-4S ferredoxin-type domains lie at Leu54–Ala84 and Thr94–Ile123. Positions 64, 67, 70, 74, 103, 106, 109, and 113 each coordinate [4Fe-4S] cluster.

It belongs to the complex I 23 kDa subunit family. As to quaternary structure, NDH-1 is composed of 14 different subunits. Subunits NuoA, H, J, K, L, M, N constitute the membrane sector of the complex. [4Fe-4S] cluster is required as a cofactor.

It is found in the cell inner membrane. The catalysed reaction is a quinone + NADH + 5 H(+)(in) = a quinol + NAD(+) + 4 H(+)(out). Functionally, NDH-1 shuttles electrons from NADH, via FMN and iron-sulfur (Fe-S) centers, to quinones in the respiratory chain. The immediate electron acceptor for the enzyme in this species is believed to be ubiquinone. Couples the redox reaction to proton translocation (for every two electrons transferred, four hydrogen ions are translocated across the cytoplasmic membrane), and thus conserves the redox energy in a proton gradient. The sequence is that of NADH-quinone oxidoreductase subunit I from Xanthomonas campestris pv. campestris (strain 8004).